Reading from the N-terminus, the 219-residue chain is Glutathione S-transferase F13 (219 aa).

In terms of domain architecture, GST N-terminal spans 2–82; sequence AMKLYGDEMS…YIAEKHRDKG (81 aa). Glutathione is bound by residues 11-12, 40-41, 53-54, and 66-67; these read SA, HK, KV, and ES. In terms of domain architecture, GST C-terminal spans 90 to 217; the sequence is DPKEAAIVKL…VSPGLTVAPT (128 aa).

It belongs to the GST superfamily. Phi family.

The protein resides in the cytoplasm. It localises to the cytosol. The enzyme catalyses RX + glutathione = an S-substituted glutathione + a halide anion + H(+). In terms of biological role, may be involved in the conjugation of reduced glutathione to a wide number of exogenous and endogenous hydrophobic electrophiles and have a detoxification role against certain herbicides. The protein is Glutathione S-transferase F13 (GSTF13) of Arabidopsis thaliana (Mouse-ear cress).